Reading from the N-terminus, the 493-residue chain is Serine/threonine-protein kinase chk-1 (493 aa).

Residues 26 to 286 form the Protein kinase domain; it reads YRVIRTLGEG…IEQIKTDPWF (261 aa). ATP contacts are provided by residues 32–40 and lysine 56; that span reads LGEGAFGEV. Aspartate 150 functions as the Proton acceptor in the catalytic mechanism. The tract at residues 308–348 is disordered; that stretch reads DENSPDCNISSTQQADAVSTAKRRHLETPDKVAHVERQNAS. The span at 312-324 shows a compositional bias: polar residues; that stretch reads PDCNISSTQQADA. Positions 333-344 are enriched in basic and acidic residues; that stretch reads LETPDKVAHVER.

This sequence belongs to the protein kinase superfamily. CAMK Ser/Thr protein kinase family. NIM1 subfamily.

The protein localises to the cytoplasm. The protein resides in the nucleus. It catalyses the reaction L-seryl-[protein] + ATP = O-phospho-L-seryl-[protein] + ADP + H(+). It carries out the reaction L-threonyl-[protein] + ATP = O-phospho-L-threonyl-[protein] + ADP + H(+). In terms of biological role, serine/threonine-protein kinase which is required for checkpoint-mediated cell cycle arrest and activation of DNA repair in response to the presence of DNA damage or unreplicated DNA. May also negatively regulate cell cycle progression during unperturbed cell cycles. Required for checkpoint mediated cell cycle arrest in response to DNA damage in germline cells. Essential for embryogenesis. The protein is Serine/threonine-protein kinase chk-1 (chk-1) of Caenorhabditis briggsae.